Reading from the N-terminus, the 292-residue chain is NAD kinase (292 aa).

Residue D73 is the Proton acceptor of the active site. Residues 73 to 74 (DG), 147 to 148 (NE), H158, R175, D177, 188 to 193 (TAYSLS), and Q247 contribute to the NAD(+) site.

It belongs to the NAD kinase family. A divalent metal cation serves as cofactor.

Its subcellular location is the cytoplasm. The catalysed reaction is NAD(+) + ATP = ADP + NADP(+) + H(+). Functionally, involved in the regulation of the intracellular balance of NAD and NADP, and is a key enzyme in the biosynthesis of NADP. Catalyzes specifically the phosphorylation on 2'-hydroxyl of the adenosine moiety of NAD to yield NADP. The polypeptide is NAD kinase (Enterobacter sp. (strain 638)).